The following is a 289-amino-acid chain: Protease HtpX homolog (289 aa).

2 helical membrane passes run 5–27 (LWVR…GYLI) and 40–60 (ALFM…SWYN). A Zn(2+)-binding site is contributed by histidine 133. Residue glutamate 134 is part of the active site. A Zn(2+)-binding site is contributed by histidine 137. Helical transmembrane passes span 143-163 (TLIQ…VNFA) and 181-201 (IVAL…IQLA). Zn(2+) is bound at residue glutamate 207.

The protein belongs to the peptidase M48B family. The cofactor is Zn(2+).

The protein resides in the cell membrane. The protein is Protease HtpX homolog of Pyrococcus furiosus (strain ATCC 43587 / DSM 3638 / JCM 8422 / Vc1).